A 344-amino-acid chain; its full sequence is Olfactory receptor class A-like protein 4 (344 aa).

At 1 to 10 (MSEVLTVDAV) the chain is on the extracellular side. Residues 11–31 (LFGLLVFSGIIGNIMVIYVVF) traverse the membrane as a helical segment. Over 32–47 (DCAKLCASRHLPPSDT) the chain is Cytoplasmic. A helical membrane pass occupies residues 48–68 (ILVHLCLANLLTSVFRTVPIF). The Extracellular portion of the chain corresponds to 69–84 (VSDLGLQVWLTAGWCR). A disulfide bridge connects residues C83 and C169. A helical transmembrane segment spans residues 85-105 (VFMLLWVWWRAVGCWVTLALS). Residues 106–130 (AFHCATLRRQHVSMGPLGHSRERRR) are Cytoplasmic-facing. Residues 131-151 (VWVVLAVVWAANLLFSLPALV) form a helical membrane-spanning segment. The Extracellular portion of the chain corresponds to 152–186 (YTTQVRGNATVELMVISCTTRPLLGCVWEFPTFQQ). A glycan (N-linked (GlcNAc...) asparagine) is linked at N159. The helical transmembrane segment at 187-207 (GYAFASSSLALNEVLPLVLMV) threads the bilayer. Residues 208 to 246 (GTNLATLQALGKHIRTVRAGGSTGAELDRHVSSERKAGH) lie on the Cytoplasmic side of the membrane. The chain crosses the membrane as a helical span at residues 247-267 (VIMALVALFVGCWVLQVAAVT). Residues 268–279 (YYNHNRGAHAEG) lie on the Extracellular side of the membrane. The helical transmembrane segment at 280-300 (LLTVAHFSASLFVGFSPLVVA) threads the bilayer. At 301–344 (LGHGKLRRRISGILQSCMHRLKQTQDKPAEITEKDGRTTQSAMK) the chain is on the cytoplasmic side. Residues 324 to 337 (TQDKPAEITEKDGR) show a composition bias toward basic and acidic residues. A disordered region spans residues 324 to 344 (TQDKPAEITEKDGRTTQSAMK).

This sequence belongs to the G-protein coupled receptor 1 family. Highly expressed in the olfactory rosette. Specifically localizes to crypt neurons in the olfactory neuroepithelium. Colocalizes with the inhibitory G-protein gnaia in crypt neurons. Not detected in other tissues tested.

The protein localises to the cell membrane. Probable olfactory receptor. The protein is Olfactory receptor class A-like protein 4 (ora4) of Danio rerio (Zebrafish).